Consider the following 242-residue polypeptide: Large ribosomal subunit protein uL1 (242 aa).

The protein belongs to the universal ribosomal protein uL1 family. In terms of assembly, part of the 50S ribosomal subunit.

Its function is as follows. Binds directly to 23S rRNA. The L1 stalk is quite mobile in the ribosome, and is involved in E site tRNA release. Protein L1 is also a translational repressor protein, it controls the translation of the L11 operon by binding to its mRNA. The sequence is that of Large ribosomal subunit protein uL1 from Streptomyces virginiae (Streptomyces cinnamonensis).